The primary structure comprises 607 residues: Autophagy-related protein 16-1 (607 aa).

An interaction with ATG5 region spans residues 13-43; the sequence is WKRHISEQLRRRDRLQRQAFEEIILQYNKLL. Residues 79–230 adopt a coiled-coil conformation; the sequence is DSQLQEMAQL…QKELAEAAKE (152 aa). At Ser-139 the chain carries Phosphoserine. Residues 207–230 form a WIPI2-binding region; the sequence is AENEKDSRRRQARLQKELAEAAKE. The interval 230-242 is RB1CC1-binding; it reads EPLPVEQDDDIEV. A phosphoserine mark is found at Ser-269 and Ser-287. The short motif at 296-299 is the Caspase cleavage element; the sequence is DNVD. 7 WD repeats span residues 320–359, 364–403, 406–445, 447–484, 486–525, 532–573, and 575–607; these read AHDG…CEFK, GSNA…LRHT, GHSG…CIKT, FAGS…IVRE, ELLG…IKQT, KCGS…KVLS, and QHSS…WAQY.

This sequence belongs to the WD repeat ATG16 family. In terms of assembly, homodimer. Homooligomer. Heterooligomer with ATG16L2. Interacts with WIPI1. Interacts with WIPI2. Interacts with RB1CC1; the interaction is required for ULK1 complex-dependent autophagy. Interacts with ATG5. Part of the minor complex composed of 4 sets of ATG12-ATG5 and ATG16L1 (400 kDa); this complex interacts with ATG3 leading to disruption of ATG7 interaction and promotion of ATG8-like proteins lipidation. Part of the major complex composed of 8 sets of ATG12-ATG5 and ATG16L1 (800 kDa). Interacts with RAB33B (GTP- and GDP-bound forms); the complex consists of a tetramer where two RAB33B molecules bind independently one molecule of the ATG16L1 homodimer; the interaction promotes ATG12-ATG5-ATG16L1 complex recruitment to phagophores. Interacts (via WD repeats) with TMEM59; the interaction mediates unconventional autophagic activity of TMEM59. Interacts with TLR2. Interacts (via WD repeats) with MEFV. Interacts with PPP1CA; the interaction dephosphorylates ATG16L1 causing dissociation of ATG12-ATG5-ATG16L1 complex. Interacts (via N-terminal) with CLTC. Interacts with NOD1. Interacts with NOD2. Interacts with TUFM. Interacts with TRIM16. Interacts (via WD repeats) with SPATA33. Interacts with IRGM. Proteolytic cleavage by activated CASP3 leads to degradation and may regulate autophagy upon cellular stress and apoptotic stimuli. In terms of processing, phosphorylation at Ser-139 promotes association with the ATG12-ATG5 conjugate to form the ATG12-ATG5-ATG16L1 complex.

Its subcellular location is the cytoplasm. The protein localises to the preautophagosomal structure membrane. The protein resides in the endosome membrane. It is found in the lysosome membrane. Plays an essential role in both canonical and non-canonical autophagy: interacts with ATG12-ATG5 to mediate the lipidation to ATG8 family proteins (MAP1LC3A, MAP1LC3B, MAP1LC3C, GABARAPL1, GABARAPL2 and GABARAP). Acts as a molecular hub, coordinating autophagy pathways via distinct domains that support either canonical or non-canonical signaling. During canonical autophagy, interacts with ATG12-ATG5 to mediate the conjugation of phosphatidylethanolamine (PE) to ATG8 proteins, to produce a membrane-bound activated form of ATG8. Thereby, controls the elongation of the nascent autophagosomal membrane. As part of the ATG8 conjugation system with ATG5 and ATG12, required for recruitment of LRRK2 to stressed lysosomes and induction of LRRK2 kinase activity in response to lysosomal stress. Also involved in non-canonical autophagy, a parallel pathway involving conjugation of ATG8 proteins to single membranes at endolysosomal compartments, probably by catalyzing conjugation of phosphatidylserine (PS) to ATG8. Non-canonical autophagy plays a key role in epithelial cells to limit lethal infection by influenza A (IAV) virus. Regulates mitochondrial antiviral signaling (MAVS)-dependent type I interferon (IFN-I) production. Negatively regulates NOD1- and NOD2-driven inflammatory cytokine response. Instead, promotes an autophagy-dependent antibacterial pathway together with NOD1 or NOD2. Plays a role in regulating morphology and function of Paneth cell. This chain is Autophagy-related protein 16-1, found in Pongo abelii (Sumatran orangutan).